Here is a 216-residue protein sequence, read N- to C-terminus: Ras-related protein RABA1c (216 aa).

GTP is bound at residue Gly20–Ser27. The short motif at Ser42–Phe50 is the Effector region element. Residues Asp68–Gln72, Asn126–Asp129, and Ser156–Ala157 contribute to the GTP site. S-geranylgeranyl cysteine attachment occurs at residues Cys213 and Cys214.

The protein belongs to the small GTPase superfamily. Rab family.

Its subcellular location is the cell membrane. In terms of biological role, intracellular vesicle trafficking and protein transport. In Arabidopsis thaliana (Mouse-ear cress), this protein is Ras-related protein RABA1c (RABA1C).